A 99-amino-acid polypeptide reads, in one-letter code: Small ribosomal subunit protein bS18 (99 aa).

This sequence belongs to the bacterial ribosomal protein bS18 family. In terms of assembly, part of the 30S ribosomal subunit. Forms a tight heterodimer with protein bS6.

Binds as a heterodimer with protein bS6 to the central domain of the 16S rRNA, where it helps stabilize the platform of the 30S subunit. In Christiangramia forsetii (strain DSM 17595 / CGMCC 1.15422 / KT0803) (Gramella forsetii), this protein is Small ribosomal subunit protein bS18.